Reading from the N-terminus, the 163-residue chain is Phosphopantetheine adenylyltransferase (163 aa).

Serine 10 contributes to the substrate binding site. ATP contacts are provided by residues 10-11 (SF) and histidine 18. Positions 42, 78, and 92 each coordinate substrate. Residues 93–95 (GVR), glutamate 103, and 127–133 (HAHVSSS) contribute to the ATP site.

The protein belongs to the bacterial CoaD family. As to quaternary structure, homohexamer. Requires Mg(2+) as cofactor.

The protein resides in the cytoplasm. The enzyme catalyses (R)-4'-phosphopantetheine + ATP + H(+) = 3'-dephospho-CoA + diphosphate. Its pathway is cofactor biosynthesis; coenzyme A biosynthesis; CoA from (R)-pantothenate: step 4/5. Reversibly transfers an adenylyl group from ATP to 4'-phosphopantetheine, yielding dephospho-CoA (dPCoA) and pyrophosphate. The polypeptide is Phosphopantetheine adenylyltransferase (Clavibacter michiganensis subsp. michiganensis (strain NCPPB 382)).